The sequence spans 321 residues: MPLTMTITNSLMYIIPILIAVAFLTLMERKMLGYMQLRKGPNITGPYGLLQPIADGLKLFTKEPIRPLNTSPILLILSPMLALTTALLIWTPIPMPHALTNLNLGLLSTLAISSMAVNSTLWAGWAPNSKYALIGSLRAVAQTISYEVTLGIILLSTLMLTGGFTMQLLTTTQKHTWLLTTSWPLAMMWFISTLAETNRAPFDLTEGESELVSGFNVEYAGGPFALFFLAEYTNIISMNLLTCILFINPGPTQHPELFLTNLIIKTMILSMSFLWIRASYPRFRYDQLMHLLWKQFLPLTMALCLLHTSLSISISGIPPLS.

Transmembrane regions (helical) follow at residues 7–27 (ITNSLMYIIPILIAVAFLTLM), 73–93 (ILLILSPMLALTTALLIWTPI), 104–124 (LGLLSTLAISSMAVNSTLWAG), 148–168 (VTLGIILLSTLMLTGGFTMQL), 175–195 (HTWLLTTSWPLAMMWFISTLA), 227–247 (FFLAEYTNIISMNLLTCILFI), 256–276 (ELFLTNLIIKTMILSMSFLWI), and 297–317 (LPLTMALCLLHTSLSISISGI).

It belongs to the complex I subunit 1 family.

Its subcellular location is the mitochondrion inner membrane. The enzyme catalyses a ubiquinone + NADH + 5 H(+)(in) = a ubiquinol + NAD(+) + 4 H(+)(out). Core subunit of the mitochondrial membrane respiratory chain NADH dehydrogenase (Complex I) that is believed to belong to the minimal assembly required for catalysis. Complex I functions in the transfer of electrons from NADH to the respiratory chain. The immediate electron acceptor for the enzyme is believed to be ubiquinone. The chain is NADH-ubiquinone oxidoreductase chain 1 (MT-ND1) from Varanus dumerilii (Dumeril's monitor).